A 767-amino-acid polypeptide reads, in one-letter code: Photosystem I P700 chlorophyll a apoprotein A1 (767 aa).

The segment at M1–A22 is disordered. Residues S8–A22 show a composition bias toward basic and acidic residues. Transmembrane regions (helical) follow at residues I76 to A99, L162 to H185, L201 to A225, V309 to Y327, R368 to Y391, L407 to V433, A455 to H477, and L558 to L576. Residues C600 and C609 each contribute to the [4Fe-4S] cluster site. 2 consecutive transmembrane segments (helical) span residues H616–W637 and I681–F703. Divinylchlorophyll a' is bound at residue H692. Residues M700 and Y708 each coordinate divinyl chlorophyll a. W709 provides a ligand contact to phylloquinone. A helical transmembrane segment spans residues A741–A761.

It belongs to the PsaA/PsaB family. In terms of assembly, the PsaA/B heterodimer binds the P700 divinyl chlorophyll special pair and subsequent electron acceptors. PSI consists of a core antenna complex that captures photons, and an electron transfer chain that converts photonic excitation into a charge separation. The cyanobacterial PSI reaction center is composed of one copy each of PsaA,B,C,D,E,F,I,J,K,L,M and X, and forms trimeric complexes. PSI electron transfer chain: 5 divinyl chlorophyll a, 1 divinyl chlorophyll a', 2 phylloquinones and 3 4Fe-4S clusters. PSI core antenna: 90 divinyl chlorophyll a, 22 carotenoids, 3 phospholipids and 1 galactolipid. P700 is a divinyl chlorophyll a/divinyl chlorophyll a' dimer, A0 is one or more divinyl chlorophyll a, A1 is one or both phylloquinones and FX is a shared 4Fe-4S iron-sulfur center. is required as a cofactor.

Its subcellular location is the cellular thylakoid membrane. The enzyme catalyses reduced [plastocyanin] + hnu + oxidized [2Fe-2S]-[ferredoxin] = oxidized [plastocyanin] + reduced [2Fe-2S]-[ferredoxin]. PsaA and PsaB bind P700, the primary electron donor of photosystem I (PSI), as well as the electron acceptors A0, A1 and FX. PSI is a plastocyanin/cytochrome c6-ferredoxin oxidoreductase, converting photonic excitation into a charge separation, which transfers an electron from the donor P700 chlorophyll pair to the spectroscopically characterized acceptors A0, A1, FX, FA and FB in turn. Oxidized P700 is reduced on the lumenal side of the thylakoid membrane by plastocyanin or cytochrome c6. This chain is Photosystem I P700 chlorophyll a apoprotein A1, found in Prochlorococcus marinus (strain MIT 9301).